A 225-amino-acid chain; its full sequence is Probable manganese catalase (225 aa).

E37 contributes to the Mn(2+) binding site. D58 and D62 together coordinate Ca(2+). Mn(2+) is bound by residues E67, H70, E138, and H171. S204 provides a ligand contact to Ca(2+). The disordered stretch occupies residues 204-225 (STPGRYVQDPNPTEPSFSNPRR). The span at 213–225 (PNPTEPSFSNPRR) shows a compositional bias: polar residues.

The protein belongs to the manganese catalase family. Ca(2+) is required as a cofactor. It depends on Mn(2+) as a cofactor.

It catalyses the reaction 2 H2O2 = O2 + 2 H2O. Its function is as follows. Catalyzes the decomposition of hydrogen peroxide into water and oxygen. The polypeptide is Probable manganese catalase (Clostridium acetobutylicum (strain ATCC 824 / DSM 792 / JCM 1419 / IAM 19013 / LMG 5710 / NBRC 13948 / NRRL B-527 / VKM B-1787 / 2291 / W)).